Here is a 307-residue protein sequence, read N- to C-terminus: UPF0276 protein PM0211 (307 aa).

It belongs to the UPF0276 family.

The polypeptide is UPF0276 protein PM0211 (Pasteurella multocida (strain Pm70)).